The chain runs to 635 residues: Threonine--tRNA ligase (635 aa).

The TGS domain occupies 1 to 61; the sequence is MINISFPDGS…DNDCKLRILT (61 aa). Residues 242 to 533 form a catalytic region; the sequence is DHRKLGRELD…LIEEYAGRFP (292 aa). The Zn(2+) site is built by cysteine 333, histidine 384, and histidine 510.

Belongs to the class-II aminoacyl-tRNA synthetase family. As to quaternary structure, homodimer. Zn(2+) serves as cofactor.

The protein resides in the cytoplasm. The enzyme catalyses tRNA(Thr) + L-threonine + ATP = L-threonyl-tRNA(Thr) + AMP + diphosphate + H(+). Its function is as follows. Catalyzes the attachment of threonine to tRNA(Thr) in a two-step reaction: L-threonine is first activated by ATP to form Thr-AMP and then transferred to the acceptor end of tRNA(Thr). Also edits incorrectly charged L-seryl-tRNA(Thr). This chain is Threonine--tRNA ligase, found in Rickettsia conorii (strain ATCC VR-613 / Malish 7).